Consider the following 255-residue polypeptide: Small ribosomal subunit protein eS1B (255 aa).

Residue Ala2 is modified to N-acetylalanine; partial. Ser245 carries the post-translational modification Phosphoserine. A Glycyl lysine isopeptide (Lys-Gly) (interchain with G-Cter in ubiquitin) cross-link involves residue Lys248. Residue Thr254 is modified to Phosphothreonine.

This sequence belongs to the eukaryotic ribosomal protein eS1 family. Component of the small ribosomal subunit. Mature ribosomes consist of a small (40S) and a large (60S) subunit. The 40S subunit contains about 33 different proteins and 1 molecule of RNA (18S). The 60S subunit contains about 49 different proteins and 3 molecules of RNA (25S, 5.8S and 5S).

The protein localises to the cytoplasm. The protein is Small ribosomal subunit protein eS1B of Saccharomyces cerevisiae (strain RM11-1a) (Baker's yeast).